The chain runs to 419 residues: MDRISQLSDDLLLQILSFIPGKDVVATSLLSKRWQSLWMLVSELEYDDSYHTGDYKSFSQFVYRSLLSNNAPVIKHLHLNLGPDCPAIDIGLWIGFALTRRLRQLKINIRTSSNDASFSLPSSLYTSDTLETLRLINFVLLDVPSSVCLPSLKVLHLKTVDYEDDASLPSLLFGCPNLEELFVERHDQDLEMDVTFVVPSLRRLSMIDKNYGQCDRYVIDVPSLKYLNITDDAVYDVRQIENMPELVEAHVDITQGVTHKFLRALTSVRQLSLCLSLSEVMCPSGIIFSQLVHLNLSTVVKGWWDLLTSMLQDSPKLQSLKLIDKQHESGLCGIETPIGWKLPSSVPECLLFSLEAFEWIGYKGRRGDREVATYVLKNAACLRTAKFSPESTDVGEKYHMLKELASVPTASTSSKLLFD.

One can recognise an F-box domain in the interval 1-53 (MDRISQLSDDLLLQILSFIPGKDVVATSLLSKRWQSLWMLVSELEYDDSYHTG). 7 LRR repeats span residues 55–81 (YKSFSQFVYRSLLSNNAPVIKHLHLNL), 132–159 (TLRLINFVLLDVPSSVCLPSLKVLHLKT), 160–185 (VDYEDDASLPSLLFGCPNLEELFVER), 187–208 (DQDLEMDVTFVVPSLRRLSMID), 226–253 (YLNITDDAVYDVRQIENMPELVEAHVDI), 254–284 (TQGVTHKFLRALTSVRQLSLCLSLSEVMCPS), and 299–324 (VVKGWWDLLTSMLQDSPKLQSLKLID). The FBD domain occupies 339-389 (GWKLPSSVPECLLFSLEAFEWIGYKGRRGDREVATYVLKNAACLRTAKFSP).

The sequence is that of F-box/FBD/LRR-repeat protein At4g26340 from Arabidopsis thaliana (Mouse-ear cress).